The sequence spans 276 residues: Secreted RxLR effector protein 120 (276 aa).

Positions 1 to 21 (MRGAYYVITALLVVASSQTSA) are cleaved as a signal peptide. A RxLR-dEER motif is present at residues 48 to 65 (QSLRGSRDVPDDLAHEER). Residues 97–130 (GKRPRVAEKDALEKASGADEASKKPRNTATDDAF) form a disordered region. Residues 101 to 119 (RVAEKDALEKASGADEASK) show a composition bias toward basic and acidic residues.

The protein belongs to the RxLR effector family.

Its subcellular location is the secreted. It is found in the host nucleus. Its function is as follows. Secreted effector that completely suppresses the host cell death induced by cell death-inducing proteins. The polypeptide is Secreted RxLR effector protein 120 (Plasmopara viticola (Downy mildew of grapevine)).